We begin with the raw amino-acid sequence, 529 residues long: Peptide chain release factor 3 (529 aa).

The tr-type G domain occupies 11–280 (AKRRTFAIIS…GLVAWAPAPM (270 aa)). GTP contacts are provided by residues 20 to 27 (SHPDAGKT), 88 to 92 (DTPGH), and 142 to 145 (NKLD).

Belongs to the TRAFAC class translation factor GTPase superfamily. Classic translation factor GTPase family. PrfC subfamily.

The protein localises to the cytoplasm. Functionally, increases the formation of ribosomal termination complexes and stimulates activities of RF-1 and RF-2. It binds guanine nucleotides and has strong preference for UGA stop codons. It may interact directly with the ribosome. The stimulation of RF-1 and RF-2 is significantly reduced by GTP and GDP, but not by GMP. This is Peptide chain release factor 3 (prfC) from Salmonella typhi.